Here is a 394-residue protein sequence, read N- to C-terminus: MTTLLKTLKQDWSLSATIAGFLAVLISYSGPLIIFFQAAQKAHVSTEMMISWIWAISIGAAVTGIFLSIRFKTPVVTAWSAPGTALLVTLFPNISLNEAVAAYITAAIVIFLVGITGYFDKLLKWIPQGIAAGMMAGILFQFGLGLFLATDTLPLIVFSMLLCYLISRRFSPRYCMLWVLICGVAFSFFLGKMNPVPLDFQIARPQFIAPEWSWFSTLNLALPLILVSLTGQFLPGMAILKLSGYNTPAKPIIAAASLASLFAAFAGGITIVLASITATLCMGKDAHELKDKRYIAGIANGLFYVLGGVFAGSIVALFSLLPKELVAALAGLALLGAIASNIKIAMQEDQQRDPALITFLATVSGMHFLGLSSVFWGMCIGMLAYFILLKPKAS.

11 helical membrane-spanning segments follow: residues 16–36, 49–69, 74–94, 99–119, 139–161, 176–196, 220–240, 252–272, 301–321, 325–345, and 368–388; these read ATIAGFLAVLISYSGPLIIFF, MISWIWAISIGAAVTGIFLSI, PVVTAWSAPGTALLVTLFPNI, AVAAYITAAIVIFLVGITGYF, LFQFGLGLFLATDTLPLIVFSML, MLWVLICGVAFSFFLGKMNPV, LALPLILVSLTGQFLPGMAIL, IIAAASLASLFAAFAGGITIV, GLFYVLGGVFAGSIVALFSLL, LVAALAGLALLGAIASNIKIA, and FLGLSSVFWGMCIGMLAYFIL.

It is found in the cell membrane. Probably involved in the transport of benzoate. This Acinetobacter baylyi (strain ATCC 33305 / BD413 / ADP1) protein is Benzoate membrane transport protein (benE).